A 336-amino-acid polypeptide reads, in one-letter code: Coproporphyrin III ferrochelatase (336 aa).

The Fe-coproporphyrin III site is built by Ser52 and Tyr116. Fe(2+)-binding residues include His172 and Glu255.

It belongs to the ferrochelatase family.

The protein localises to the cytoplasm. It catalyses the reaction Fe-coproporphyrin III + 2 H(+) = coproporphyrin III + Fe(2+). Its pathway is porphyrin-containing compound metabolism; protoheme biosynthesis. Functionally, involved in coproporphyrin-dependent heme b biosynthesis. Catalyzes the insertion of ferrous iron into coproporphyrin III to form Fe-coproporphyrin III. This is Coproporphyrin III ferrochelatase from Mycobacterium avium (strain 104).